Consider the following 234-residue polypeptide: Ubiquitin thioesterase OTUB2 (234 aa).

The OTU domain occupies 40–231 (TAIRKTKGDG…TSHYNILYAA (192 aa)). D48 is an active-site residue. C51 (nucleophile) is an active-site residue. The active site involves H224.

The protein belongs to the peptidase C65 family. Widely expressed. Expressed at higher level in brain.

The catalysed reaction is Thiol-dependent hydrolysis of ester, thioester, amide, peptide and isopeptide bonds formed by the C-terminal Gly of ubiquitin (a 76-residue protein attached to proteins as an intracellular targeting signal).. Hydrolase that can remove conjugated ubiquitin from proteins in vitro and may therefore play an important regulatory role at the level of protein turnover by preventing degradation. Mediates deubiquitination of 'Lys-11'-,'Lys-48'- and 'Lys-63'-linked polyubiquitin chains, with a preference for 'Lys-63'-linked polyubiquitin chains. The sequence is that of Ubiquitin thioesterase OTUB2 (OTUB2) from Homo sapiens (Human).